Consider the following 736-residue polypeptide: Dimethylamine dehydrogenase (736 aa).

C31 is subject to S-6-FMN cysteine. 176 to 179 contacts substrate; sequence YGAH. Y181 acts as the Proton donor in catalysis. Positions 229 and 329 each coordinate FMN. Residues C352, C355, C358, and C371 each coordinate [4Fe-4S] cluster. 398–427 lines the ADP pocket; it reads DVLIVGAGPAGSECARVLMERGYTVHLVDT.

The protein in the N-terminal section; belongs to the NADH:flavin oxidoreductase/NADH oxidase family. It depends on FMN as a cofactor. Requires [4Fe-4S] cluster as cofactor.

The enzyme catalyses dimethylamine + oxidized [electron-transfer flavoprotein] + H2O + H(+) = methylamine + reduced [electron-transfer flavoprotein] + formaldehyde. In Hyphomicrobium sp. (strain x), this protein is Dimethylamine dehydrogenase (dmd).